The following is a 419-amino-acid chain: E3 ubiquitin-protein ligase pellino homolog 2 (419 aa).

In terms of domain architecture, FHA; atypical spans 15-202 (EPVKYRELVV…HPQGGFTEES (188 aa)).

The protein belongs to the pellino family. As to quaternary structure, interacts with TRAF6, IRAK4 and MAP3K7. Interacts with IRAK1. Interacts with BCL10; this interaction is impaired by SOCS3. Phosphorylated by IRAK1 and IRAK4 enhancing its E3 ligase activity. Widely expressed both in embryos and adult. Weakly or not expressed in spleen and thymus.

The catalysed reaction is S-ubiquitinyl-[E2 ubiquitin-conjugating enzyme]-L-cysteine + [acceptor protein]-L-lysine = [E2 ubiquitin-conjugating enzyme]-L-cysteine + N(6)-ubiquitinyl-[acceptor protein]-L-lysine.. Its pathway is protein modification; protein ubiquitination. Functionally, E3 ubiquitin ligase catalyzing the covalent attachment of ubiquitin moieties onto substrate proteins. Involved in the TLR and IL-1 signaling pathways via interaction with the complex containing IRAK kinases and TRAF6. Mediates IL1B-induced IRAK1 'Lys-63'-linked polyubiquitination and possibly 'Lys-48'-linked ubiquitination. May be important for LPS- and IL1B-induced MAP3K7-dependent, but not MAP3K3-dependent, NF-kappa-B activation. Can activate the MAP (mitogen activated protein) kinase pathway leading to activation of ELK1. The polypeptide is E3 ubiquitin-protein ligase pellino homolog 2 (Peli2) (Mus musculus (Mouse)).